Reading from the N-terminus, the 467-residue chain is Citrate synthase, mitochondrial (467 aa).

Residues His-301 and His-347 contribute to the active site.

It belongs to the citrate synthase family.

It localises to the mitochondrion matrix. The enzyme catalyses oxaloacetate + acetyl-CoA + H2O = citrate + CoA + H(+). It functions in the pathway carbohydrate metabolism; tricarboxylic acid cycle; isocitrate from oxaloacetate: step 1/2. The protein is Citrate synthase, mitochondrial (CIT) of Candida tropicalis (Yeast).